We begin with the raw amino-acid sequence, 217 residues long: Small ribosomal subunit protein uS3 (217 aa).

The KH type-2 domain occupies 38-106; that stretch reads IRKFVQKELA…QVHINIIEIK (69 aa).

This sequence belongs to the universal ribosomal protein uS3 family. Part of the 30S ribosomal subunit. Forms a tight complex with proteins S10 and S14.

Functionally, binds the lower part of the 30S subunit head. Binds mRNA in the 70S ribosome, positioning it for translation. The protein is Small ribosomal subunit protein uS3 of Streptococcus pneumoniae serotype 19F (strain G54).